The primary structure comprises 360 residues: Protein Wnt-2 (360 aa).

The N-terminal stretch at 1–25 is a signal peptide; it reads MNAPLGGIWLWLPLLLTWLTPEVNS. Intrachain disulfides connect Cys76–Cys87, Cys127–Cys135, Cys137–Cys157, Cys206–Cys220, Cys208–Cys215, Cys278–Cys309, Cys294–Cys304, Cys308–Cys348, Cys324–Cys339, Cys326–Cys336, and Cys331–Cys332. Ser212 is lipidated: O-palmitoleoyl serine; by PORCN. An N-linked (GlcNAc...) asparagine glycan is attached at Asn295.

Belongs to the Wnt family. Palmitoleoylation is required for efficient binding to frizzled receptors. Depalmitoleoylation leads to Wnt signaling pathway inhibition.

It localises to the secreted. It is found in the extracellular space. The protein localises to the extracellular matrix. Its function is as follows. Ligand for members of the frizzled family of seven transmembrane receptors. Functions in the canonical Wnt signaling pathway that results in activation of transcription factors of the TCF/LEF family. Functions as a upstream regulator of FGF10 expression. Plays an important role in embryonic lung development. May contribute to embryonic brain development by regulating the proliferation of dopaminergic precursors and neurons. The chain is Protein Wnt-2 (WNT2) from Nomascus leucogenys (Northern white-cheeked gibbon).